The chain runs to 51 residues: Small, acid-soluble spore protein K (51 aa).

A disordered region spans residues 1-51 (MRNKAKGFPNPISFNGNKANNADEHASKRPDGTTRDRPQERMRSSNHFNSL). A compositionally biased stretch (basic and acidic residues) spans 21–43 (NADEHASKRPDGTTRDRPQERMR).

It belongs to the SspK family.

Its subcellular location is the spore core. The chain is Small, acid-soluble spore protein K from Shouchella clausii (strain KSM-K16) (Alkalihalobacillus clausii).